Reading from the N-terminus, the 228-residue chain is L-ribulose-5-phosphate 4-epimerase UlaF (228 aa).

Substrate contacts are provided by residues 26–27 (GN), 43–44 (SG), and 72–73 (SS). Zn(2+) is bound by residues D74, H93, and H95. D118 serves as the catalytic Proton donor/acceptor. A Zn(2+)-binding site is contributed by H167. Y225 functions as the Proton donor/acceptor in the catalytic mechanism.

This sequence belongs to the aldolase class II family. AraD/FucA subfamily. Requires Zn(2+) as cofactor.

The catalysed reaction is L-ribulose 5-phosphate = D-xylulose 5-phosphate. Its pathway is cofactor degradation; L-ascorbate degradation; D-xylulose 5-phosphate from L-ascorbate: step 4/4. Catalyzes the isomerization of L-ribulose 5-phosphate to D-xylulose 5-phosphate. Is involved in the anaerobic L-ascorbate utilization. The chain is L-ribulose-5-phosphate 4-epimerase UlaF from Salmonella choleraesuis (strain SC-B67).